A 963-amino-acid polypeptide reads, in one-letter code: MADPAECNIKVMCRFRPLNESEVNRGDKYVAKFQGEDTVMIASKPYAFDRVFQSSTSQEQVYNDCAKKIVKDVLEGYNGTIFAYGQTSSGKTHTMEGKLHDPEGMGIIPRIVQDIFNYIYSMDENLEFHIKVSYFEIYLDKIRDLLDVSKTNLSVHEDKNRVPYVKGCTERFVCSPDEVMDTIDEGKSNRHVAVTNMNEHSSRSHSIFLINVKQENTQTEQKLSGKLYLVDLAGSEKVSKTGAEGAVLDEAKNINKSLSALGNVISALAEGSTYVPYRDSKMTRILQDSLGGNCRTTIVICCSPSSYNESETKSTLLFGQRAKTIKNTVCVNVELTAEQWKKKYEKEKEKNKTLRNTIQWLENELNRWRNGETVPIDEQFDKEKANLEAFTADKDVAITNDKPAAAIGMAGSFTDAERRKCEEEIAKLYKQLDDKDEEINQQSQLVEKLKTQMLDQEELLASTRRDQDNMQAELNRLQAENDASKEEVKEVLQALEELAVNYDQKSQEVEDKTKEYELLSDELNQKSATLASIDAELQKLKEMTNHQKKRAAEMMASLLKDLAEIGIAVGNNDVKQPEGTGMIDEEFTVARLYISKMKSEVKTMVKRCKQLESTQTESNKKMEENEKELAACQLRISQHEAKIKSLTEYLQNVEQKKRQLEESVDSLGEELVQLRAQEKVHEMEKEHLNKVQTANEVKQAVEQQIQSHRETHQKQISSLRDEVEAKEKLITDLQDQNQKMVLEQERLRVEHERLKAVDQEKSRKLHELTVMQDRREQARQDLKGLEETVAKELQTLHNLRKLFVQDLATRVKKSAEVDSDDTGGSAAQKQKISFLENNLEQLTKVHKQLVRDNADLRCELPKLEKRLRATAERVKALESALKEAKENASRDRKRYQQEVDRIKEAVRSKNMARRGHSAQIAKPIRPGQHPAASPTHPGAVRGGGSFVQNNQPVGLRGGGGKQA.

Position 2 is an N-acetylalanine (A2). Residues 8–325 (NIKVMCRFRP…LLFGQRAKTI (318 aa)) form the Kinesin motor domain. Residue 85-92 (GQTSSGKT) coordinates ATP. K213 participates in a covalent cross-link: Glycyl lysine isopeptide (Lys-Gly) (interchain with G-Cter in SUMO2). Positions 330–913 (CVNVELTAEQ…EAVRSKNMAR (584 aa)) form a coiled coil. Residues 908–963 (SKNMARRGHSAQIAKPIRPGQHPAASPTHPGAVRGGGSFVQNNQPVGLRGGGGKQA) are disordered. Residues 915 to 963 (GHSAQIAKPIRPGQHPAASPTHPGAVRGGGSFVQNNQPVGLRGGGGKQA) form a globular region. Phosphoserine occurs at positions 933 and 945. Position 956 is an omega-N-methylarginine (R956).

The protein belongs to the TRAFAC class myosin-kinesin ATPase superfamily. Kinesin family. Kinesin subfamily. Oligomer composed of two heavy chains and two light chains. Interacts with GRIP1 and PPP1R42. Interacts with SYBU. Interacts with JAKMIP1. Interacts with PLEKHM2. Interacts with ECPAS. Interacts with ZFYVE27. Found in a complex with OGT, RHOT1, RHOT2 and TRAK1. Interacts with APP (via cytoplasmic domain). Expressed in the brain (at protein level). Expressed in the brain, liver, kidney, spleen, heart, lung and sciatic nerve.

It localises to the cytoplasm. Its subcellular location is the cytoskeleton. It is found in the cytolytic granule membrane. The protein localises to the lysosome membrane. Microtubule-dependent motor required for normal distribution of mitochondria and lysosomes. Can induce formation of neurite-like membrane protrusions in non-neuronal cells in a ZFYVE27-dependent manner. Regulates centrosome and nuclear positioning during mitotic entry. During the G2 phase of the cell cycle in a BICD2-dependent manner, antagonizes dynein function and drives the separation of nuclei and centrosomes. Required for anterograde axonal transportation of MAPK8IP3/JIP3 which is essential for MAPK8IP3/JIP3 function in axon elongation. Through binding with PLEKHM2 and ARL8B, directs lysosome movement toward microtubule plus ends. Involved in NK cell-mediated cytotoxicity. Drives the polarization of cytolytic granules and microtubule-organizing centers (MTOCs) toward the immune synapse between effector NK lymphocytes and target cells. The polypeptide is Kinesin-1 heavy chain (Rattus norvegicus (Rat)).